Reading from the N-terminus, the 343-residue chain is Phenylalanine--tRNA ligase alpha subunit (343 aa).

Residue E256 participates in Mg(2+) binding.

This sequence belongs to the class-II aminoacyl-tRNA synthetase family. Phe-tRNA synthetase alpha subunit type 1 subfamily. Tetramer of two alpha and two beta subunits. Mg(2+) is required as a cofactor.

It is found in the cytoplasm. It catalyses the reaction tRNA(Phe) + L-phenylalanine + ATP = L-phenylalanyl-tRNA(Phe) + AMP + diphosphate + H(+). The sequence is that of Phenylalanine--tRNA ligase alpha subunit from Phytoplasma australiense.